The sequence spans 142 residues: MKLFLISAALVVLGLAAVADAIGCSDPSPFQGRWVIGVDKKECVALVKEKCGNLRDYTTGRWVRGQHVKSNCGSIPKFTAIATFLKPGNKYLGHAAIFESCASDGIWVYDQWNAKPVERRKIRYGNTGKPNYNGDNFYTIEL.

A signal peptide spans 1–35 (MKLFLISAALVVLGLAAVADAIGCSDPSPFQGRWV). Residues Cys-43 and His-94 contribute to the active site.

This sequence belongs to the cell wall amidase Dae2/Tae2-like family. May be post-translationally modified, since the saliva wild-type protein is slightly heavier than the recombinant one. In terms of tissue distribution, detected in salivary glands and in the gut (at protein level).

The protein resides in the secreted. Its function is as follows. Tick gut and saliva antibacterial peptide that directly antagonizes host skin commensals which enter the ticks during feeding. Acts as a cell wall hydrolase that cleaves the bond between gamma-D-glutamate-meso-diaminopimelate of a peptide stem and D-alanine of another peptide stem in peptidoglycans. In vitro, degrades peptidoglycans from both Gram-negative and Gram-positive bacteria. Is not able to traverse the protective outer membrane of Gram-negative bacteria. Is not able to kill Borrelia burgdorferi, one of the Lyme disease-causing bacteria. The chain is Domesticated amidase effector 2 from Ixodes scapularis (Black-legged tick).